The primary structure comprises 494 residues: Probable cytochrome P450 313a4 (494 aa).

Heme is bound at residue Cys-440.

The protein belongs to the cytochrome P450 family. Requires heme as cofactor.

It localises to the endoplasmic reticulum membrane. The protein resides in the microsome membrane. Functionally, may be involved in the metabolism of insect hormones and in the breakdown of synthetic insecticides. The chain is Probable cytochrome P450 313a4 (Cyp313a4) from Drosophila melanogaster (Fruit fly).